A 291-amino-acid chain; its full sequence is 4-hydroxy-tetrahydrodipicolinate synthase (291 aa).

T45 contacts pyruvate. The active-site Proton donor/acceptor is Y133. Residue K161 is the Schiff-base intermediate with substrate of the active site. I203 contributes to the pyruvate binding site.

Belongs to the DapA family. In terms of assembly, homotetramer; dimer of dimers.

It localises to the cytoplasm. It catalyses the reaction L-aspartate 4-semialdehyde + pyruvate = (2S,4S)-4-hydroxy-2,3,4,5-tetrahydrodipicolinate + H2O + H(+). Its pathway is amino-acid biosynthesis; L-lysine biosynthesis via DAP pathway; (S)-tetrahydrodipicolinate from L-aspartate: step 3/4. In terms of biological role, catalyzes the condensation of (S)-aspartate-beta-semialdehyde [(S)-ASA] and pyruvate to 4-hydroxy-tetrahydrodipicolinate (HTPA). The polypeptide is 4-hydroxy-tetrahydrodipicolinate synthase (Methylococcus capsulatus (strain ATCC 33009 / NCIMB 11132 / Bath)).